Here is a 338-residue protein sequence, read N- to C-terminus: 1-aminocyclopropane-1-carboxylate deaminase (338 aa).

At Lys-51 the chain carries N6-(pyridoxal phosphate)lysine. Ser-78 acts as the Nucleophile in catalysis.

It belongs to the ACC deaminase/D-cysteine desulfhydrase family. In terms of assembly, homotrimer. It depends on pyridoxal 5'-phosphate as a cofactor.

It catalyses the reaction 1-aminocyclopropane-1-carboxylate + H2O = 2-oxobutanoate + NH4(+). Its function is as follows. Catalyzes a cyclopropane ring-opening reaction, the irreversible conversion of 1-aminocyclopropane-1-carboxylate (ACC) to ammonia and alpha-ketobutyrate. Allows growth on ACC as a nitrogen source. The sequence is that of 1-aminocyclopropane-1-carboxylate deaminase from Pseudomonas putida (Arthrobacter siderocapsulatus).